Consider the following 377-residue polypeptide: Succinyl-diaminopimelate desuccinylase (377 aa).

Position 66 (H66) interacts with Zn(2+). The active site involves D68. Residue D99 coordinates Zn(2+). Catalysis depends on E133, which acts as the Proton acceptor. Zn(2+) contacts are provided by E134, E162, and H348.

This sequence belongs to the peptidase M20A family. DapE subfamily. In terms of assembly, homodimer. It depends on Zn(2+) as a cofactor. Co(2+) is required as a cofactor.

It carries out the reaction N-succinyl-(2S,6S)-2,6-diaminopimelate + H2O = (2S,6S)-2,6-diaminopimelate + succinate. The protein operates within amino-acid biosynthesis; L-lysine biosynthesis via DAP pathway; LL-2,6-diaminopimelate from (S)-tetrahydrodipicolinate (succinylase route): step 3/3. Catalyzes the hydrolysis of N-succinyl-L,L-diaminopimelic acid (SDAP), forming succinate and LL-2,6-diaminopimelate (DAP), an intermediate involved in the bacterial biosynthesis of lysine and meso-diaminopimelic acid, an essential component of bacterial cell walls. The chain is Succinyl-diaminopimelate desuccinylase from Alcanivorax borkumensis (strain ATCC 700651 / DSM 11573 / NCIMB 13689 / SK2).